Consider the following 785-residue polypeptide: Phenylalanine--tRNA ligase beta subunit (785 aa).

The 113-residue stretch at 38–150 folds into the tRNA-binding domain; the sequence is CEHLKTFVIA…NTYNVGDTFF (113 aa). The B5 domain maps to 394-470; it reads VDNIELNFFP…RLYGYDKICE (77 aa). Positions 448, 454, 457, and 458 each coordinate Mg(2+). The FDX-ACB domain maps to 690–783; it reads SCYQSVKRDF…VAEKLGGVLR (94 aa).

Belongs to the phenylalanyl-tRNA synthetase beta subunit family. Type 1 subfamily. In terms of assembly, tetramer of two alpha and two beta subunits. It depends on Mg(2+) as a cofactor.

It is found in the cytoplasm. The catalysed reaction is tRNA(Phe) + L-phenylalanine + ATP = L-phenylalanyl-tRNA(Phe) + AMP + diphosphate + H(+). The polypeptide is Phenylalanine--tRNA ligase beta subunit (Ehrlichia canis (strain Jake)).